A 366-amino-acid polypeptide reads, in one-letter code: Alanine racemase (366 aa).

Lys-33 (proton acceptor; specific for D-alanine) is an active-site residue. The residue at position 33 (Lys-33) is an N6-(pyridoxal phosphate)lysine. Arg-129 serves as a coordination point for substrate. The Proton acceptor; specific for L-alanine role is filled by Tyr-253. Position 301 (Met-301) interacts with substrate.

Belongs to the alanine racemase family. The cofactor is pyridoxal 5'-phosphate.

The catalysed reaction is L-alanine = D-alanine. It functions in the pathway amino-acid biosynthesis; D-alanine biosynthesis; D-alanine from L-alanine: step 1/1. In terms of biological role, catalyzes the interconversion of L-alanine and D-alanine. May also act on other amino acids. The sequence is that of Alanine racemase (alr) from Xanthomonas axonopodis pv. citri (strain 306).